The primary structure comprises 591 residues: V-type ATP synthase alpha chain (591 aa).

242–249 (GPFGAGKT) serves as a coordination point for ATP.

It belongs to the ATPase alpha/beta chains family.

The catalysed reaction is ATP + H2O + 4 H(+)(in) = ADP + phosphate + 5 H(+)(out). Its function is as follows. Produces ATP from ADP in the presence of a proton gradient across the membrane. The V-type alpha chain is a catalytic subunit. The sequence is that of V-type ATP synthase alpha chain from Chlamydia abortus (strain DSM 27085 / S26/3) (Chlamydophila abortus).